We begin with the raw amino-acid sequence, 983 residues long: UPF0746 protein DDB_G0280809 (983 aa).

The segment covering 1 to 21 (MISNKRKEIDTINEHHEKNND) has biased composition (basic and acidic residues). The segment at 1-26 (MISNKRKEIDTINEHHEKNNDDSDGI) is disordered. Residues 42–76 (SGSTNYRELQIIAKSLGLASNGKKQLVYNRIEGYF) enclose the SAP domain. Residues 391–413 (HTTPTSTSTSTSTSTSTYTSTST) form a disordered region. Positions 392-413 (TTPTSTSTSTSTSTSTYTSTST) are enriched in low complexity.

It belongs to the UPF0746 family.

The protein is UPF0746 protein DDB_G0280809 of Dictyostelium discoideum (Social amoeba).